The chain runs to 311 residues: NEDD4 family-interacting protein 2 (311 aa).

The tract at residues 1–133 is disordered; sequence RRSASDAELS…PPYSSITVEA (133 aa). At 1-206 the chain is on the cytoplasmic side; the sequence is RRSASDAELS…VEQLRVGNDG (206 aa). Residues 7-22 show a composition bias toward low complexity; that stretch reads AELSAGAEGATGSEAA. Gly residues predominate over residues 26–37; the sequence is DLGGRTRGGGRG. The segment covering 38 to 47 has biased composition (low complexity); the sequence is SAAAAATTST. Residues 48–75 show a composition bias toward basic and acidic residues; sequence REAEGAERRGDTPARKPDPEAGRMDHHQ. The span at 92–101 shows a compositional bias: polar residues; sequence ESSAVEQPST. Residues 102 to 120 show a composition bias toward low complexity; sequence SSLAAPTVEAAASAPALDP. An interaction with NEDD4 region spans residues 123-126; sequence PPPY. Positions 123–126 match the PPxY motif 1 motif; it reads PPPY. 4 positions are modified to phosphotyrosine; by SRC: tyrosine 126, tyrosine 142, tyrosine 146, and tyrosine 152. Short sequence motifs (PPxY motif) lie at residues 149-152 and 159-161; these read PPPY and PTY. The chain crosses the membrane as a helical span at residues 207 to 227; the sequence is IFMLAFFMAFIFNWLGFCLSF. Topologically, residues 228–232 are extracellular; the sequence is CITNT. Residues 233–253 traverse the membrane as a helical segment; the sequence is IAGRYGAICGFGLSLIKWILI. The Cytoplasmic portion of the chain corresponds to 254–262; sequence VRFSDYFTG. Residues 263-283 traverse the membrane as a helical segment; that stretch reads YFNGQYWLWWIFLVLGLLLFF. Over 284 to 311 the chain is Extracellular; sequence RGFVNYLKVRNMSESMAAAHRTRYFFLL.

Forms heterodimers with NDFIP1. Interacts with HECT domain-containing E3 ubiquitin-protein ligases, including NEDD4. Interacts with NEDD4L. When phosphorylated at Tyr-142, interacts with SRC and LYN SH2 domain. May thus act as a scaffold that recruits SRC to NDFIP1, enhancing NDFIP1 phosphorylation. Interacts with SLC11A2/DMT1. May interact with phosphorylated EGFR. Interacts with KCNH2. In terms of processing, ubiquitinated by NEDD4 and NEDD4L; which does not affect turnover. Also ubiquitinated by ITCH. Undergoes transient tyrosine-phosphorylation following EGF stimulation, most probably catalyzed by SRC. Phosphorylation on Tyr-126, Tyr-146 and Tyr-152 are dependent on the phosphorylation on Tyr-142. Also phosphorylated by LYN and FYN. In terms of tissue distribution, ubiquitously expressed, with highest levels in brain, liver, kidney and testis.

Its subcellular location is the endosome membrane. The protein resides in the golgi apparatus membrane. The protein localises to the endosome. It localises to the multivesicular body membrane. In terms of biological role, activates HECT domain-containing E3 ubiquitin-protein ligases, including ITCH, NEDD4, NEDD4L, SMURF2, WWP1 and WWP2, and consequently modulates the stability of their targets. As a result, may control many cellular processes. Recruits ITCH, NEDD4 and SMURF2 to endosomal membranes. Negatively regulates KCNH2 potassium channel activity by decreasing its cell-surface expression and interfering with channel maturation through recruitment of NEDD4L to the Golgi apparatus and multivesicular body where it mediates KCNH2 degradation. May modulate EGFR signaling. Together with NDFIP1, limits the cytokine signaling and expansion of effector Th2 T-cells by promoting degradation of JAK1, probably by ITCH- and NEDD4L-mediated ubiquitination. The protein is NEDD4 family-interacting protein 2 (Ndfip2) of Mus musculus (Mouse).